A 408-amino-acid polypeptide reads, in one-letter code: DNA polymerase processivity factor (408 aa).

A Nuclear localization signal motif is present at residues 344 to 353; it reads KKRRNLLTKR.

Belongs to the herpesviridae DNA polymerase processivity factor family. As to quaternary structure, interacts with the DNA polymerase catalytic subunit. Interacts with the origin-binding protein.

The protein resides in the host nucleus. Its function is as follows. Plays an essential role in viral DNA replication by acting as the polymerase accessory subunit. Associates with the viral polymerase to increase its processivity and forms high-affinity direct interactions with DNA. Facilitates the origin-binding protein loading onto DNA thus increasing its ability to assemble into a functional complex capable of unwinding duplex DNA. The chain is DNA polymerase processivity factor from Varicella-zoster virus (strain Oka vaccine) (HHV-3).